A 689-amino-acid polypeptide reads, in one-letter code: 1,4-alpha-glucan-branching enzyme (689 aa).

The (1,4-alpha-D-glucosyl)n site is built by tryptophan 93 and lysine 128. The active-site Nucleophile is the aspartate 345. Catalysis depends on glutamate 400, which acts as the Proton donor.

This sequence belongs to the glycosyl hydrolase 13 family. GlgB subfamily.

It is found in the cytoplasm. The catalysed reaction is Transfers a segment of a (1-&gt;4)-alpha-D-glucan chain to a primary hydroxy group in a similar glucan chain.. It participates in glycan biosynthesis; glycogen biosynthesis. Functionally, glycogen-branching enzyme participates in the glycogen biosynthetic process along with glycogenin and glycogen synthase. Generates alpha-1,6-glucosidic branches from alpha-1,4-linked glucose chains, to increase solubility of the glycogen polymer. In Aspergillus oryzae (strain ATCC 42149 / RIB 40) (Yellow koji mold), this protein is 1,4-alpha-glucan-branching enzyme (gbeA).